Reading from the N-terminus, the 505-residue chain is RNA-binding region-containing protein 3 (505 aa).

The region spanning 15 to 90 (KTLIIRHLPR…RTLVVEFAKD (76 aa)) is the RRM 1 domain. Disordered regions lie at residues 96–123 (ILKDPPVSDRTAAAVAEKEKKEKQQPSV), 193–236 (PPMF…EEER), 354–374 (AQVPRQEEEQEEDEDIPSEFI), and 486–505 (ARSAKPKQESADPKKGGRKH). Over residues 193 to 214 (PPMFEMPSGPLPPPFPPENPPL) the composition is skewed to pro residues. Acidic residues-rich tracts occupy residues 221–235 (GSEEESEYESEDEEE) and 361–370 (EEQEEDEDIP). The 84-residue stretch at 405–488 (CRLYVKNVAK…KPLVVQFARS (84 aa)) folds into the RRM 2 domain. Basic and acidic residues predominate over residues 491 to 505 (PKQESADPKKGGRKH).

As to quaternary structure, component of the U11/U12 snRNPs that are part of the U12-type spliceosome.

It is found in the nucleus. Participates in pre-mRNA U12-dependent splicing, performed by the minor spliceosome which removes U12-type introns. U12-type introns comprise less than 1% of all non-coding sequences. In Danio rerio (Zebrafish), this protein is RNA-binding region-containing protein 3.